The primary structure comprises 418 residues: UPF0261 protein BRA1168/BS1330_II1159 (418 aa).

It belongs to the UPF0261 family.

This is UPF0261 protein BRA1168/BS1330_II1159 from Brucella suis biovar 1 (strain 1330).